We begin with the raw amino-acid sequence, 550 residues long: Beta-cubebene synthase (550 aa).

Asp303, Asp307, Asp447, and Glu455 together coordinate Mg(2+). The DDXXD motif motif lies at 303–307 (DDTYD).

The protein belongs to the terpene synthase family. Tpsa subfamily. Mg(2+) serves as cofactor. As to expression, expressed in young developing leaves and in stamens. Not detected in tepals and carpels.

It catalyses the reaction (2E,6E)-farnesyl diphosphate = beta-cubebene + diphosphate. The protein operates within secondary metabolite biosynthesis; terpenoid biosynthesis. In terms of biological role, sesquiterpene synthase converting farnesyl diphosphate into beta-cubebene (24.5%), alpha-muurolene (19.3%), delta-cadinol (18.6%), delta-elemene (16.0%), tau-muurolene (10.8%), and beta-elemene (10.8%). No activity with geranyl diphosphate or geranylgeranyl diphosphate. This is Beta-cubebene synthase from Magnolia grandiflora (Southern magnolia).